Reading from the N-terminus, the 425-residue chain is uncharacterized protein (425 aa).

The HD domain occupies 55-181 (RYAHSLGVYE…DLDTDRMDYL (127 aa)).

This is an uncharacterized protein from Mycoplasma genitalium (strain ATCC 33530 / DSM 19775 / NCTC 10195 / G37) (Mycoplasmoides genitalium).